We begin with the raw amino-acid sequence, 545 residues long: CTP synthase (545 aa).

The interval 1–266 (MATNYIFVTG…DSFVCDRFRL (266 aa)) is amidoligase domain. CTP is bound at residue Ser-14. Ser-14 contacts UTP. Residues 15–20 (SLGKGI) and Asp-72 each bind ATP. 2 residues coordinate Mg(2+): Asp-72 and Glu-140. Residues 147-149 (DIE), 187-192 (KTKPTQ), and Lys-223 each bind CTP. UTP contacts are provided by residues 187-192 (KTKPTQ) and Lys-223. Position 239-241 (239-241 (KDV)) interacts with ATP. The Glutamine amidotransferase type-1 domain maps to 291–542 (TIGMVGKYVE…VAAAKAYQDS (252 aa)). Residue Gly-352 coordinates L-glutamine. Catalysis depends on Cys-379, which acts as the Nucleophile; for glutamine hydrolysis. L-glutamine contacts are provided by residues 380 to 383 (LGMQ), Glu-403, and Arg-470. Residues His-515 and Glu-517 contribute to the active site.

It belongs to the CTP synthase family. In terms of assembly, homotetramer.

The catalysed reaction is UTP + L-glutamine + ATP + H2O = CTP + L-glutamate + ADP + phosphate + 2 H(+). It carries out the reaction L-glutamine + H2O = L-glutamate + NH4(+). The enzyme catalyses UTP + NH4(+) + ATP = CTP + ADP + phosphate + 2 H(+). Its pathway is pyrimidine metabolism; CTP biosynthesis via de novo pathway; CTP from UDP: step 2/2. Its activity is regulated as follows. Allosterically activated by GTP, when glutamine is the substrate; GTP has no effect on the reaction when ammonia is the substrate. The allosteric effector GTP functions by stabilizing the protein conformation that binds the tetrahedral intermediate(s) formed during glutamine hydrolysis. Inhibited by the product CTP, via allosteric rather than competitive inhibition. Functionally, catalyzes the ATP-dependent amination of UTP to CTP with either L-glutamine or ammonia as the source of nitrogen. Regulates intracellular CTP levels through interactions with the four ribonucleotide triphosphates. The protein is CTP synthase of Haemophilus ducreyi (strain 35000HP / ATCC 700724).